The primary structure comprises 243 residues: Transmembrane protein 174 (243 aa).

Helical transmembrane passes span 40–60 (LLFS…MGWI) and 73–93 (LLGP…VCKF).

In terms of assembly, interacts with SLC34A1; regulates SLC34A1 internalization by PTH and FGF23. As to expression, predominantly expressed in kidney. Selectively localized in the apical membrane of renal proximal tubule epithelial cells.

The protein resides in the endoplasmic reticulum membrane. Its subcellular location is the apical cell membrane. Its function is as follows. Regulator of plasma phosphate homeostasis. Decreases serum inorganic phosphate (Pi) uptake by regulating the sodium-phosphate cotransporter SLC34A1 trafficking by PTH and FGF23 in the kidney. The chain is Transmembrane protein 174 (TMEM174) from Homo sapiens (Human).